The primary structure comprises 271 residues: uncharacterized protein (271 aa).

Residues 233 to 261 (VEPDPNRFSEPVDQPTLVEEGKEARRTER) form a disordered region. The segment covering 251 to 261 (EEGKEARRTER) has biased composition (basic and acidic residues).

Its function is as follows. May be involved in swimming motility. This is an uncharacterized protein from Haloferax volcanii (strain ATCC 29605 / DSM 3757 / JCM 8879 / NBRC 14742 / NCIMB 2012 / VKM B-1768 / DS2) (Halobacterium volcanii).